The following is a 76-amino-acid chain: Alpha/kappa-conotoxin-like fe14.1 (76 aa).

Residues 1-24 (MPSVRSVTCCCLLWMMLSVQLVTP) form the signal peptide. The propeptide occupies 25–39 (GSPGTAQLSGHRTAR). Intrachain disulfides connect Cys46–Cys61 and Cys50–Cys63. An Arginine amide modification is found at Arg64. The propeptide occupies 65-76 (GKRDVVSSSMAV).

It belongs to the conotoxin J superfamily. As to expression, expressed by the venom duct.

The protein localises to the secreted. In terms of biological role, highly inhibits both nicotinic acetylcholine receptors (neuronal (alpha-3/beta-4) and muscular (alpha-1/beta-1/epsilon/delta) subtypes) and the voltage-gated potassium channel Kv1.6/KCNA6 subtype. This is Alpha/kappa-conotoxin-like fe14.1 from Conus ferrugineus (Cone snail).